We begin with the raw amino-acid sequence, 355 residues long: UDP-N-acetylglucosamine--N-acetylmuramyl-(pentapeptide) pyrophosphoryl-undecaprenol N-acetylglucosamine transferase (355 aa).

UDP-N-acetyl-alpha-D-glucosamine-binding positions include 12-14 (TGG), Asn124, Arg163, Ser191, Ile243, 262-267 (ALTVAE), and Gln288.

The protein belongs to the glycosyltransferase 28 family. MurG subfamily.

The protein localises to the cell inner membrane. The catalysed reaction is di-trans,octa-cis-undecaprenyl diphospho-N-acetyl-alpha-D-muramoyl-L-alanyl-D-glutamyl-meso-2,6-diaminopimeloyl-D-alanyl-D-alanine + UDP-N-acetyl-alpha-D-glucosamine = di-trans,octa-cis-undecaprenyl diphospho-[N-acetyl-alpha-D-glucosaminyl-(1-&gt;4)]-N-acetyl-alpha-D-muramoyl-L-alanyl-D-glutamyl-meso-2,6-diaminopimeloyl-D-alanyl-D-alanine + UDP + H(+). It functions in the pathway cell wall biogenesis; peptidoglycan biosynthesis. Functionally, cell wall formation. Catalyzes the transfer of a GlcNAc subunit on undecaprenyl-pyrophosphoryl-MurNAc-pentapeptide (lipid intermediate I) to form undecaprenyl-pyrophosphoryl-MurNAc-(pentapeptide)GlcNAc (lipid intermediate II). The chain is UDP-N-acetylglucosamine--N-acetylmuramyl-(pentapeptide) pyrophosphoryl-undecaprenol N-acetylglucosamine transferase from Tolumonas auensis (strain DSM 9187 / NBRC 110442 / TA 4).